A 258-amino-acid polypeptide reads, in one-letter code: tRNA pseudouridine synthase A (258 aa).

Asp53 serves as the catalytic Nucleophile. Tyr111 is a substrate binding site.

Belongs to the tRNA pseudouridine synthase TruA family. In terms of assembly, homodimer.

The catalysed reaction is uridine(38/39/40) in tRNA = pseudouridine(38/39/40) in tRNA. Its function is as follows. Formation of pseudouridine at positions 38, 39 and 40 in the anticodon stem and loop of transfer RNAs. This Streptococcus agalactiae serotype Ia (strain ATCC 27591 / A909 / CDC SS700) protein is tRNA pseudouridine synthase A.